A 351-amino-acid polypeptide reads, in one-letter code: Outer membrane porin protein 32 (351 aa).

An N-terminal signal peptide occupies residues 1–19 (MKKSLIALAVLAASGAAMA). Gln20 is subject to Pyrrolidone carboxylic acid.

To bacterial outer membrane proteins and porins. In terms of assembly, homotrimer.

It localises to the cell outer membrane. Forms anion selective channels. The polypeptide is Outer membrane porin protein 32 (omp32) (Delftia acidovorans (Pseudomonas acidovorans)).